We begin with the raw amino-acid sequence, 257 residues long: MATVVIKIGGSTLEALEEGFYEGVVKRASLGDKIMIVHGGGPAINNLLQAMAVESQFVNGLRKTTAEVLTAAETALSGQINKQLVRSLYQAGGKAIGLSGSDGHLLKTIPIDTDKLGFVGAVESVNVDVLFNVAKAGYIPVIAPIGMDANYQPYNINADTAAAAVAKASKAEELVFVTDVDGVQKDGKVIKEMDEVLAKHYIEEGVIYGGMVPKVNACLDSLSGALTKARIVNGKKAYHPSAGTAIVKQSNVLTSGA.

Residues 40 to 41 (GG), R62, and N155 each bind substrate.

The protein belongs to the acetylglutamate kinase family. ArgB subfamily.

The protein resides in the cytoplasm. It carries out the reaction N-acetyl-L-glutamate + ATP = N-acetyl-L-glutamyl 5-phosphate + ADP. The protein operates within amino-acid biosynthesis; L-arginine biosynthesis; N(2)-acetyl-L-ornithine from L-glutamate: step 2/4. Functionally, catalyzes the ATP-dependent phosphorylation of N-acetyl-L-glutamate. The sequence is that of Acetylglutamate kinase from Shouchella clausii (strain KSM-K16) (Alkalihalobacillus clausii).